The following is a 3174-amino-acid chain: Intermembrane lipid transfer protein VPS13A (3174 aa).

The Chorein N-terminal domain maps to F3–K116. 3 TPR repeats span residues L212 to V245, L373 to E406, and I537 to D575. S839 is modified (phosphoserine). Residues E842–C848 carry the FFAT motif. TPR repeat units follow at residues V1256 to L1289 and L1291 to E1320. A Phosphoserine modification is found at S1416. One copy of the TPR 6 repeat lies at Y2009–D2041. The SHR-BD domain occupies V2209–G2454. 3 TPR repeats span residues P2568–V2601, L2717–E2751, and I2860–F2898. Residues E2751–L3174 form a required for mitochondrial localization region. The interval P2953 to A3027 is required for lipid droplet localization. A TPR 10 repeat occupies M3086–E3119.

This sequence belongs to the VPS13 family. As to quaternary structure, interacts (via FFAT motif) with VAPA and VAPB. Interacts with RAB7A. Interacts with XK. Expressed in red blood cells (at protein level). Widely expressed, with high expression in brain, heart, skeletal muscle and kidney.

Its subcellular location is the mitochondrion outer membrane. The protein resides in the endoplasmic reticulum membrane. It localises to the endosome membrane. It is found in the lysosome membrane. The protein localises to the lipid droplet. Its subcellular location is the golgi apparatus. The protein resides in the cytoplasmic vesicle. It localises to the secretory vesicle. It is found in the neuronal dense core vesicle. Functionally, mediates the transfer of lipids between membranes at organelle contact sites. Binds phospholipids. Required for the formation or stabilization of ER-mitochondria contact sites which enable transfer of lipids between the ER and mitochondria. Negatively regulates lipid droplet size and motility. Required for efficient lysosomal protein degradation. The polypeptide is Intermembrane lipid transfer protein VPS13A (VPS13A) (Homo sapiens (Human)).